Reading from the N-terminus, the 575-residue chain is Proline--tRNA ligase (575 aa).

The protein belongs to the class-II aminoacyl-tRNA synthetase family. ProS type 1 subfamily. As to quaternary structure, homodimer.

It localises to the cytoplasm. It catalyses the reaction tRNA(Pro) + L-proline + ATP = L-prolyl-tRNA(Pro) + AMP + diphosphate. In terms of biological role, catalyzes the attachment of proline to tRNA(Pro) in a two-step reaction: proline is first activated by ATP to form Pro-AMP and then transferred to the acceptor end of tRNA(Pro). As ProRS can inadvertently accommodate and process non-cognate amino acids such as alanine and cysteine, to avoid such errors it has two additional distinct editing activities against alanine. One activity is designated as 'pretransfer' editing and involves the tRNA(Pro)-independent hydrolysis of activated Ala-AMP. The other activity is designated 'posttransfer' editing and involves deacylation of mischarged Ala-tRNA(Pro). The misacylated Cys-tRNA(Pro) is not edited by ProRS. The polypeptide is Proline--tRNA ligase (Desulfitobacterium hafniense (strain DSM 10664 / DCB-2)).